The chain runs to 77 residues: NEDD8-like protein RUB1 (77 aa).

The region spanning Met-1–Arg-74 is the Ubiquitin-like domain. Gly-76 is covalently cross-linked (Glycyl lysine isopeptide (Gly-Lys) (interchain with K-? in acceptor proteins)). Asn-77 is a propeptide.

Interacts with CDC53 and DCN1.

In terms of biological role, ubiquitin-like protein modifier that can be covalently attached to lysine residues of target proteins. Activated by the dimeric UBA3-ULA1 E1 enzyme and conjugated by the E2 UBC12 to substrate proteins. RUB1-conjugated (neddylated) substrate proteins include the cullins CDC53, RTT101 and CUL3, and the modification enhances the ubiquitin-ligase activity of the corresponding cullin-RING-based E3 ubiquitin-protein ligase complexes (CRLs). The chain is NEDD8-like protein RUB1 (RUB1) from Saccharomyces cerevisiae (strain ATCC 204508 / S288c) (Baker's yeast).